We begin with the raw amino-acid sequence, 259 residues long: MLLNIANSVGKRTIKFAQSVGSFSLFSFAAVSSIIRPPLYLSLIIRQLLFIGFHSLPVVAMTTFFSGAVLALQSYTGFSRFSAESSIATVVVLSLTRELGPVLAGLMVAGRVGASIAAEIATMRVTEQVDALYTLSTDPIKYLVFPRVIAAIITMPCLVLIGDIIGVMGGYLVGVYKLDFNSTAYLTSTFHYLEPIDVISGLVKAGVFGFIISIISCYSGYYSGKGAKGVGRATTSAVVNSSILILISNYLITELFFKV.

5 helical membrane-spanning segments follow: residues 13–35, 49–69, 148–168, 195–215, and 237–257; these read TIKF…SSII, LFIG…SGAV, VIAA…IGVM, PIDV…ISII, and AVVN…ELFF.

The protein belongs to the MlaE permease family.

The protein resides in the cell inner membrane. In terms of biological role, could be part of an ABC transporter complex. The chain is Probable ABC transporter permease protein RF_0080 from Rickettsia felis (strain ATCC VR-1525 / URRWXCal2) (Rickettsia azadi).